The sequence spans 280 residues: Bifunctional protein FolD (280 aa).

Residues 159–161 (GRS), Ser-184, and Ile-225 contribute to the NADP(+) site.

It belongs to the tetrahydrofolate dehydrogenase/cyclohydrolase family. As to quaternary structure, homodimer.

It carries out the reaction (6R)-5,10-methylene-5,6,7,8-tetrahydrofolate + NADP(+) = (6R)-5,10-methenyltetrahydrofolate + NADPH. It catalyses the reaction (6R)-5,10-methenyltetrahydrofolate + H2O = (6R)-10-formyltetrahydrofolate + H(+). It functions in the pathway one-carbon metabolism; tetrahydrofolate interconversion. Catalyzes the oxidation of 5,10-methylenetetrahydrofolate to 5,10-methenyltetrahydrofolate and then the hydrolysis of 5,10-methenyltetrahydrofolate to 10-formyltetrahydrofolate. The protein is Bifunctional protein FolD of Methanosphaerula palustris (strain ATCC BAA-1556 / DSM 19958 / E1-9c).